The chain runs to 126 residues: MARVKRAVNAQKKRRTVLEQASGYRGQRSRLYRKAKEQMLHSMTYSYRDRRARKGDFRQLWITRINAAARANGLTYNRFVQGLKLSGVEVDRKILADLAVNDAVAFTALVEVARAALAAAPEPTAA.

Belongs to the bacterial ribosomal protein bL20 family.

Its function is as follows. Binds directly to 23S ribosomal RNA and is necessary for the in vitro assembly process of the 50S ribosomal subunit. It is not involved in the protein synthesizing functions of that subunit. This chain is Large ribosomal subunit protein bL20, found in Frankia casuarinae (strain DSM 45818 / CECT 9043 / HFP020203 / CcI3).